A 231-amino-acid polypeptide reads, in one-letter code: Large ribosomal subunit protein uL1 (231 aa).

Belongs to the universal ribosomal protein uL1 family. Part of the 50S ribosomal subunit.

Functionally, binds directly to 23S rRNA. The L1 stalk is quite mobile in the ribosome, and is involved in E site tRNA release. In terms of biological role, protein L1 is also a translational repressor protein, it controls the translation of the L11 operon by binding to its mRNA. The sequence is that of Large ribosomal subunit protein uL1 from Macrococcus caseolyticus (strain JCSC5402) (Macrococcoides caseolyticum).